The following is a 336-amino-acid chain: MSEIRTLGEFIVAKQHDFPHASGELSSLIGSIKLAAKIVNREINKAGLVDITGASGEENIQGEQQQKLDVYANDKFKAALEARDQVCGVASEEEDEAVAFNKELNQNAKYVVLMDPLDGSSNIDVNVSVGTIFSIYRRISPIGTPATEEDFLQPGHKQVAAGYIIYGSSTMLVYTTGNGVHGFTYDPSLGVFCLSHENMQVPKDGNIYSINEGNYIRFPEGIKQYLKFCQESKPEDNRPYTSRYIGSLVADFHRNLLKGGIYLYPSTQAYPNGKLRLLYECNPMAMLIEEAGGKATDGEQRILDIKPSELHQRVPFFVGSTNMVDKVHAFLDEWRD.

Glutamate 92, aspartate 115, leucine 117, and aspartate 118 together coordinate Mg(2+). Substrate contacts are provided by residues 118–121 (DGSS), asparagine 211, tyrosine 244, 262–264 (YLY), and lysine 274. Glutamate 280 serves as a coordination point for Mg(2+).

The protein belongs to the FBPase class 1 family. In terms of assembly, homotetramer. Mg(2+) is required as a cofactor.

It localises to the cytoplasm. The enzyme catalyses beta-D-fructose 1,6-bisphosphate + H2O = beta-D-fructose 6-phosphate + phosphate. Its pathway is carbohydrate biosynthesis; gluconeogenesis. The protein is Fructose-1,6-bisphosphatase class 1 of Aliivibrio fischeri (strain MJ11) (Vibrio fischeri).